The following is a 201-amino-acid chain: 3-isopropylmalate dehydratase small subunit 1 (201 aa).

It belongs to the LeuD family. LeuD type 1 subfamily. In terms of assembly, heterodimer of LeuC and LeuD.

It catalyses the reaction (2R,3S)-3-isopropylmalate = (2S)-2-isopropylmalate. It participates in amino-acid biosynthesis; L-leucine biosynthesis; L-leucine from 3-methyl-2-oxobutanoate: step 2/4. In terms of biological role, catalyzes the isomerization between 2-isopropylmalate and 3-isopropylmalate, via the formation of 2-isopropylmaleate. The sequence is that of 3-isopropylmalate dehydratase small subunit 1 from Salmonella typhimurium (strain LT2 / SGSC1412 / ATCC 700720).